The following is a 473-amino-acid chain: H(+)/Cl(-) exchange transporter ClcA (473 aa).

The Cytoplasmic portion of the chain corresponds to 1–32; that stretch reads MKTDTPTFEAQQIVRLRRGRLIRRLVQRDKTP. A helical membrane pass occupies residues 33–69; sequence LAILLMAAVVGTLTGLVGVAFEKAVSWVQNMRIGALV. Residues 70-76 lie on the Periplasmic side of the membrane; sequence QVADHAF. A helical membrane pass occupies residues 77–100; it reads LLWPLAFILSALLAMVGYFLVRKF. The short motif at 106 to 110 is the Selectivity filter part_1 element; that stretch reads GSGIP. Chloride is bound at residue Ser107. Positions 109–116 form an intramembrane region, helical; the sequence is IPEIEGAL. Topologically, residues 117-123 are cytoplasmic; the sequence is EELRPVR. The next 2 membrane-spanning stretches (helical) occupy residues 124 to 141 and 148 to 166; these read WWRVLPVKFIGGMGTLGA and EGPTVQIGGNLGRMVLDVF. Residues 146-150 carry the Selectivity filter part_2 motif; the sequence is GREGP. Topologically, residues 167–176 are cytoplasmic; it reads RMRSAEARHT. 2 intramembrane regions (helical) span residues 177–189 and 193–201; these read LLATGAAAGLSAA and PLAGILFII. Residues 202 to 214 lie on the Cytoplasmic side of the membrane; that stretch reads EEMRPQFRYNLIS. The chain crosses the membrane as a helical span at residues 215–232; it reads IKAVFTGVIMSSIVFRIF. Residues 233 to 252 lie on the Periplasmic side of the membrane; it reads NGEAPIIEVGKLSNAPVNTL. The helical transmembrane segment at 253-281 threads the bilayer; sequence WLYLVLGIIFGCVGPVFNTLVLRTQDMFQ. Over 282–287 the chain is Cytoplasmic; sequence RFHGGE. The chain crosses the membrane as a helical span at residues 288 to 309; that stretch reads IKKWVLMGGAIGGLCGILGLIE. At 310–329 the chain is on the periplasmic side; sequence PEAAGGGFNLIPIAAAGNFS. A run of 2 helical transmembrane segments spans residues 330-349 and 355-376; these read VGLLLFIFITRVVTTLLCFS and GIFAPMLALGTLLGTAFGMAAA. The Selectivity filter part_3 signature appears at 355 to 359; the sequence is GIFAP. Positions 356 and 357 each coordinate chloride. Residues 377 to 386 lie on the Periplasmic side of the membrane; the sequence is VLFPQYHLEA. The helical intramembrane region spans 387–401; it reads GTFAIAGMGALMAAS. Positions 402 to 404 form an intramembrane region, note=Loop between two helices; that stretch reads VRA. Residues 405 to 416 constitute an intramembrane region (helical); sequence PLTGIVLVLEMT. The note=Loop between two helices intramembrane region spans 417-421; the sequence is DNYQL. The chain crosses the membrane as a helical span at residues 422–438; that stretch reads ILPMIITCLGATLLAQF. The Cytoplasmic portion of the chain corresponds to 439-473; the sequence is LGGKPLYSTILARTLAKQDAEQAAKNQSTPAGENT. Position 445 (Tyr445) interacts with chloride.

Belongs to the chloride channel (TC 2.A.49) family. ClcA subfamily. Homodimer.

The protein resides in the cell inner membrane. The enzyme catalyses 2 chloride(in) + H(+)(out) = 2 chloride(out) + H(+)(in). Proton-coupled chloride transporter. Functions as antiport system and exchanges two chloride ions for 1 proton. Probably acts as an electrical shunt for an outwardly-directed proton pump that is linked to amino acid decarboxylation, as part of the extreme acid resistance (XAR) response. This is H(+)/Cl(-) exchange transporter ClcA from Salmonella arizonae (strain ATCC BAA-731 / CDC346-86 / RSK2980).